Consider the following 155-residue polypeptide: Snaclec agkicetin-C subunit alpha (155 aa).

The signal sequence occupies residues 1–23; sequence MGRFIFVSFGLLVVFLSLSGTAA. Disulfide bonds link Cys-25–Cys-36, Cys-53–Cys-149, and Cys-124–Cys-141. In terms of domain architecture, C-type lectin spans 32-150; the sequence is YIRFCYQPFK…CGLKHVFMCK (119 aa).

This sequence belongs to the snaclec family. As to quaternary structure, heterodimer of subunits alpha and beta; disulfide-linked. Expressed by the venom gland.

Its subcellular location is the secreted. Is a potent glycoprotein Ibalpha (GP1BA) antagonist. Concentration-dependently inhibits botrocetin-, ristocetin- and low dose thrombin-induced platelet aggregation. Inhibits platelet adhesion only through inhibiting the vWF interaction with GP1BA, but has minimal effect on other platelet receptors, such as alpha-IIb/beta-3 (ITGA2B/ITGB3) or alpha-2/beta-1 (ITGA2/ITGB1). Causes an instant severe thrombocytopenia in rats and is not lethal to mice. The chain is Snaclec agkicetin-C subunit alpha from Deinagkistrodon acutus (Hundred-pace snake).